The primary structure comprises 105 residues: Large ribosomal subunit protein bL21 (105 aa).

Belongs to the bacterial ribosomal protein bL21 family. In terms of assembly, part of the 50S ribosomal subunit. Contacts protein L20.

In terms of biological role, this protein binds to 23S rRNA in the presence of protein L20. The chain is Large ribosomal subunit protein bL21 from Parabacteroides distasonis (strain ATCC 8503 / DSM 20701 / CIP 104284 / JCM 5825 / NCTC 11152).